The primary structure comprises 461 residues: Alcaligin biosynthesis enzyme (461 aa).

9–15 (VAIGIGP) lines the FAD pocket.

The protein belongs to the lysine N(6)-hydroxylase/L-ornithine N(5)-oxygenase family. The cofactor is FAD.

It participates in siderophore biosynthesis; alcaligin biosynthesis. This is Alcaligin biosynthesis enzyme (alcA) from Bordetella bronchiseptica (strain ATCC BAA-588 / NCTC 13252 / RB50) (Alcaligenes bronchisepticus).